A 356-amino-acid polypeptide reads, in one-letter code: tRNA N6-adenosine threonylcarbamoyltransferase (356 aa).

2 residues coordinate Fe cation: His115 and His119. Residues 138–142 (LVSGG), Asp171, Gly184, and Asn283 contribute to the substrate site. Asp311 provides a ligand contact to Fe cation.

It belongs to the KAE1 / TsaD family. The cofactor is Fe(2+).

It is found in the cytoplasm. It catalyses the reaction L-threonylcarbamoyladenylate + adenosine(37) in tRNA = N(6)-L-threonylcarbamoyladenosine(37) in tRNA + AMP + H(+). Its function is as follows. Required for the formation of a threonylcarbamoyl group on adenosine at position 37 (t(6)A37) in tRNAs that read codons beginning with adenine. Is involved in the transfer of the threonylcarbamoyl moiety of threonylcarbamoyl-AMP (TC-AMP) to the N6 group of A37, together with TsaE and TsaB. TsaD likely plays a direct catalytic role in this reaction. This Prochlorococcus marinus (strain MIT 9312) protein is tRNA N6-adenosine threonylcarbamoyltransferase.